A 104-amino-acid polypeptide reads, in one-letter code: Large ribosomal subunit protein uL24 (104 aa).

Belongs to the universal ribosomal protein uL24 family. As to quaternary structure, part of the 50S ribosomal subunit.

Its function is as follows. One of two assembly initiator proteins, it binds directly to the 5'-end of the 23S rRNA, where it nucleates assembly of the 50S subunit. In terms of biological role, one of the proteins that surrounds the polypeptide exit tunnel on the outside of the subunit. In Flavobacterium johnsoniae (strain ATCC 17061 / DSM 2064 / JCM 8514 / BCRC 14874 / CCUG 350202 / NBRC 14942 / NCIMB 11054 / UW101) (Cytophaga johnsonae), this protein is Large ribosomal subunit protein uL24.